The chain runs to 204 residues: Methylthioribulose-1-phosphate dehydratase (204 aa).

Zn(2+)-binding residues include histidine 95 and histidine 97.

The protein belongs to the aldolase class II family. MtnB subfamily. Zn(2+) serves as cofactor.

It catalyses the reaction 5-(methylsulfanyl)-D-ribulose 1-phosphate = 5-methylsulfanyl-2,3-dioxopentyl phosphate + H2O. It functions in the pathway amino-acid biosynthesis; L-methionine biosynthesis via salvage pathway; L-methionine from S-methyl-5-thio-alpha-D-ribose 1-phosphate: step 2/6. Its function is as follows. Catalyzes the dehydration of methylthioribulose-1-phosphate (MTRu-1-P) into 2,3-diketo-5-methylthiopentyl-1-phosphate (DK-MTP-1-P). The polypeptide is Methylthioribulose-1-phosphate dehydratase (Parvibaculum lavamentivorans (strain DS-1 / DSM 13023 / NCIMB 13966)).